A 264-amino-acid chain; its full sequence is Indole-3-glycerol phosphate synthase (264 aa).

The protein belongs to the TrpC family.

It carries out the reaction 1-(2-carboxyphenylamino)-1-deoxy-D-ribulose 5-phosphate + H(+) = (1S,2R)-1-C-(indol-3-yl)glycerol 3-phosphate + CO2 + H2O. It functions in the pathway amino-acid biosynthesis; L-tryptophan biosynthesis; L-tryptophan from chorismate: step 4/5. This is Indole-3-glycerol phosphate synthase from Stenotrophomonas maltophilia (strain K279a).